A 763-amino-acid polypeptide reads, in one-letter code: Phosphoglycerol transferase I (763 aa).

4 helical membrane-spanning segments follow: residues 4–19 (LLSFALFLASVLIYAW), 26–48 (WWFAATLTVLGLFVVLNITLFAS), 76–98 (YILPGIGIVLGLTAVFGALGWIL), and 105–127 (PHHFGYSLLALLLALGSVDASPA).

Belongs to the OpgB family.

The protein localises to the cell inner membrane. The catalysed reaction is a phosphatidylglycerol + a membrane-derived-oligosaccharide D-glucose = a 1,2-diacyl-sn-glycerol + a membrane-derived-oligosaccharide 6-(glycerophospho)-D-glucose.. Its pathway is glycan metabolism; osmoregulated periplasmic glucan (OPG) biosynthesis. Its function is as follows. Transfers a phosphoglycerol residue from phosphatidylglycerol to the membrane-bound nascent glucan backbones. The protein is Phosphoglycerol transferase I of Shigella flexneri.